Here is a 98-residue protein sequence, read N- to C-terminus: Small ribosomal subunit protein uS17 (98 aa).

Belongs to the universal ribosomal protein uS17 family. In terms of assembly, part of the 30S ribosomal subunit.

Its function is as follows. One of the primary rRNA binding proteins, it binds specifically to the 5'-end of 16S ribosomal RNA. The sequence is that of Small ribosomal subunit protein uS17 from Carboxydothermus hydrogenoformans (strain ATCC BAA-161 / DSM 6008 / Z-2901).